The primary structure comprises 422 residues: Transcription termination factor Rho 1 (422 aa).

The 76-residue stretch at 49 to 124 (AAIGGGVVEI…VKAHSINFTD (76 aa)) folds into the Rho RNA-BD domain. Residues 173–178 (GKGQRA), 185–190 (RAGKTI), and Arg-216 contribute to the ATP site.

The protein belongs to the Rho family. Homohexamer. The homohexamer assembles into an open ring structure.

In terms of biological role, facilitates transcription termination by a mechanism that involves Rho binding to the nascent RNA, activation of Rho's RNA-dependent ATPase activity, and release of the mRNA from the DNA template. The sequence is that of Transcription termination factor Rho 1 from Ehrlichia chaffeensis (strain ATCC CRL-10679 / Arkansas).